A 226-amino-acid chain; its full sequence is PKHD-type hydroxylase PputW619_4316 (226 aa).

One can recognise a Fe2OG dioxygenase domain in the interval 78–178; the sequence is KVFPPLINCY…RYAAFFWTQS (101 aa). Fe cation is bound by residues H96, D98, and H159. 2-oxoglutarate is bound at residue R169.

Fe(2+) is required as a cofactor. L-ascorbate serves as cofactor.

This is PKHD-type hydroxylase PputW619_4316 from Pseudomonas putida (strain W619).